A 300-amino-acid polypeptide reads, in one-letter code: DNA repair protein RecO (300 aa).

The protein belongs to the RecO family.

Its function is as follows. Involved in DNA repair and RecF pathway recombination. In Nostoc punctiforme (strain ATCC 29133 / PCC 73102), this protein is DNA repair protein RecO.